We begin with the raw amino-acid sequence, 212 residues long: GTP cyclohydrolase 1 (212 aa).

The Zn(2+) site is built by Cys-103, His-106, and Cys-174.

It belongs to the GTP cyclohydrolase I family. In terms of assembly, toroid-shaped homodecamer, composed of two pentamers of five dimers.

It carries out the reaction GTP + H2O = 7,8-dihydroneopterin 3'-triphosphate + formate + H(+). It functions in the pathway cofactor biosynthesis; 7,8-dihydroneopterin triphosphate biosynthesis; 7,8-dihydroneopterin triphosphate from GTP: step 1/1. This chain is GTP cyclohydrolase 1, found in Caulobacter vibrioides (strain ATCC 19089 / CIP 103742 / CB 15) (Caulobacter crescentus).